Consider the following 55-residue polypeptide: Large ribosomal subunit protein bL33 (55 aa).

Post-translationally, the protein is methylated on either Ala-2 or Lys-3.

The polypeptide is Large ribosomal subunit protein bL33 (Rhodopseudomonas palustris (strain ATCC BAA-98 / CGA009)).